Here is a 442-residue protein sequence, read N- to C-terminus: 26S proteasome regulatory subunit 6A (442 aa).

Position 12 is a phosphoserine (Ser12). 230–237 contacts ATP; it reads GPPGTGKT. At Ser379 the chain carries Phosphoserine.

It belongs to the AAA ATPase family. As to quaternary structure, component of the 19S proteasome regulatory particle complex. The 26S proteasome consists of a 20S core particle (CP) and two 19S regulatory subunits (RP). The regulatory particle is made of a lid composed of 9 subunits, a base containing 6 ATPases including PSMC3 and few additional components. Interacts with PAAF1.

It is found in the cytoplasm. The protein resides in the nucleus. Functionally, component of the 26S proteasome, a multiprotein complex involved in the ATP-dependent degradation of ubiquitinated proteins. This complex plays a key role in the maintenance of protein homeostasis by removing misfolded or damaged proteins, which could impair cellular functions, and by removing proteins whose functions are no longer required. Therefore, the proteasome participates in numerous cellular processes, including cell cycle progression, apoptosis, or DNA damage repair. PSMC3 belongs to the heterohexameric ring of AAA (ATPases associated with diverse cellular activities) proteins that unfolds ubiquitinated target proteins that are concurrently translocated into a proteolytic chamber and degraded into peptides. This Mus musculus (Mouse) protein is 26S proteasome regulatory subunit 6A (Psmc3).